The following is a 96-amino-acid chain: uncharacterized protein (96 aa).

A compositionally biased stretch (basic and acidic residues) spans 1–18 (MSNVDRYDVHRDGIEKDR). The interval 1–96 (MSNVDRYDVH…REQHHQPQKQ (96 aa)) is disordered. Residues 28–46 (QNGQSQSTMDNRPPWNNDT) show a composition bias toward polar residues. The span at 70 to 96 (TIDRQQEELTKNWTESLREQHHQPQKQ) shows a compositional bias: basic and acidic residues.

This is an uncharacterized protein from Caenorhabditis elegans.